We begin with the raw amino-acid sequence, 291 residues long: Fructose-1,6-bisphosphatase class 1 1 (291 aa).

4 residues coordinate Mg(2+): Glu78, Asp95, Leu97, and Asp98. Residues 98–101, Tyr203, and Lys233 each bind substrate; that span reads DGSS. Residue Glu239 coordinates Mg(2+).

Belongs to the FBPase class 1 family. As to quaternary structure, homotetramer. Mg(2+) is required as a cofactor.

It is found in the cytoplasm. The catalysed reaction is beta-D-fructose 1,6-bisphosphate + H2O = beta-D-fructose 6-phosphate + phosphate. Its pathway is carbohydrate biosynthesis; gluconeogenesis. The polypeptide is Fructose-1,6-bisphosphatase class 1 1 (Haloarcula marismortui (strain ATCC 43049 / DSM 3752 / JCM 8966 / VKM B-1809) (Halobacterium marismortui)).